A 76-amino-acid polypeptide reads, in one-letter code: Mating-type pheromone BBP1(1) (76 aa).

Cysteine 73 carries the post-translational modification Cysteine methyl ester. The S-farnesyl cysteine moiety is linked to residue cysteine 73. Residues 74-76 constitute a propeptide, removed in mature form; that stretch reads VVA.

The protein resides in the cell membrane. In terms of biological role, activates B-regulated development. This Schizophyllum commune (Split gill fungus) protein is Mating-type pheromone BBP1(1) (BBP1(1)).